The following is an 80-amino-acid chain: Large ribosomal subunit protein bL31B (80 aa).

Belongs to the bacterial ribosomal protein bL31 family. Type B subfamily. As to quaternary structure, part of the 50S ribosomal subunit.

The sequence is that of Large ribosomal subunit protein bL31B from Xylella fastidiosa (strain 9a5c).